The following is a 265-amino-acid chain: Sarcotoxin II-1 (265 aa).

An N-terminal signal peptide occupies residues 1-22; the sequence is MKSFVLFAACMAIIALGSLAHA. Positions 23–24 are cleaved as a propeptide — removed by a dipeptidylpeptidase; that stretch reads YP. The residue at position 25 (Gln-25) is a Pyrrolidone carboxylic acid. The residue at position 264 (Gly-264) is a Glycine amide.

It belongs to the attacin/sarcotoxin-2 family. Synthesized by the fat body and is eventually secreted into the hemolymph.

The protein localises to the secreted. Functionally, sarcotoxin II is an antibacterial protein which plays a role in the inflammatory response of this insect. The main effect of sarcotoxin II on E.coli may be the inhibition of cell wall synthesis, including septum formation. This is Sarcotoxin II-1 from Sarcophaga peregrina (Flesh fly).